The primary structure comprises 510 residues: Gelatinase (510 aa).

The first 30 residues, 1-30 (MMKGNKILYILGTGIFVGSSCLFSSLFVAA), serve as a signal peptide directing secretion. A propeptide spanning residues 31–192 (EEQVYSESEV…IMEKQDLTEH (162 aa)) is cleaved from the precursor. Aspartate 324 is a binding site for Ca(2+). Zn(2+) is bound at residue histidine 328. The active site involves glutamate 329. Residues histidine 332 and glutamate 352 each contribute to the Zn(2+) site. A Ca(2+)-binding site is contributed by serine 376. The Proton donor role is filled by histidine 419.

The protein belongs to the peptidase M4 family.

Its subcellular location is the secreted. The enzyme catalyses Preferential cleavage: Xaa-|-Leu, Xaa-|-Phe, Xaa-|-Tyr, Xaa-|-Ala.. Its activity is regulated as follows. Inhibited by L-leucine hydroxamate and phosphoramidon. Not inhibited by phenylmethanesulfonyl fluoride. Reversibly inactivated by straight-chain aliphatic alcohols. Functionally, metalloprotease capable of the hydrolysis of insoluble hydrophobic substrates. Hydrolyzes azocoll and gelatin and, at a lower rate, soluble and insoluble collagens. Does not cleave short synthetic peptides. Preferentially hydrolyzes the 24-Phe-|-Phe-25 bond in the insulin B-chain, followed by the 5-His-|-Leu-6 bond. Inactivates endothelin-1, primarily by cleavage of the 5-Ser-|-Leu-6 and 16-His-|-Leu-17 bonds. Hydrolyzes the alpha chain of C3 to generate a C3b-like protein. Inhibits complement-mediated hemolysis and opsinization of bacteria. Hydrolyzes the insect antimicrobial peptide cecropin. Decreases the length of E.faecalis chains via the activation of autolysin. Degrades polymerized fibrin. The protein is Gelatinase of Enterococcus faecalis (strain ATCC 700802 / V583).